Here is a 201-residue protein sequence, read N- to C-terminus: Large ribosomal subunit protein uL4 (201 aa).

The interval 44–68 (KAQKTRSEVAGTTKKSKKQKGGGAR) is disordered.

This sequence belongs to the universal ribosomal protein uL4 family. As to quaternary structure, part of the 50S ribosomal subunit.

In terms of biological role, one of the primary rRNA binding proteins, this protein initially binds near the 5'-end of the 23S rRNA. It is important during the early stages of 50S assembly. It makes multiple contacts with different domains of the 23S rRNA in the assembled 50S subunit and ribosome. Its function is as follows. Forms part of the polypeptide exit tunnel. The protein is Large ribosomal subunit protein uL4 of Xanthomonas campestris pv. campestris (strain 8004).